Here is a 347-residue protein sequence, read N- to C-terminus: Anthranilate phosphoribosyltransferase (347 aa).

Residues Gly82, 85 to 86 (GD), Thr90, 92 to 95 (NIST), 110 to 118 (KHGNRAITS), and Thr122 each bind 5-phospho-alpha-D-ribose 1-diphosphate. Position 82 (Gly82) interacts with anthranilate. Ser94 is a Mg(2+) binding site. Asn113 contacts anthranilate. Arg168 serves as a coordination point for anthranilate. Residues Asp226 and Glu227 each coordinate Mg(2+).

This sequence belongs to the anthranilate phosphoribosyltransferase family. In terms of assembly, homodimer. The cofactor is Mg(2+).

It catalyses the reaction N-(5-phospho-beta-D-ribosyl)anthranilate + diphosphate = 5-phospho-alpha-D-ribose 1-diphosphate + anthranilate. Its pathway is amino-acid biosynthesis; L-tryptophan biosynthesis; L-tryptophan from chorismate: step 2/5. Catalyzes the transfer of the phosphoribosyl group of 5-phosphorylribose-1-pyrophosphate (PRPP) to anthranilate to yield N-(5'-phosphoribosyl)-anthranilate (PRA). The polypeptide is Anthranilate phosphoribosyltransferase (Caulobacter sp. (strain K31)).